The sequence spans 330 residues: Fructose-1,6-bisphosphatase class 1 (330 aa).

Mg(2+) is bound by residues E84, D103, L105, and D106. Substrate-binding positions include 106–109 (DGSS), N196, and K262. A Mg(2+)-binding site is contributed by E268.

This sequence belongs to the FBPase class 1 family. In terms of assembly, homotetramer. Requires Mg(2+) as cofactor.

It localises to the cytoplasm. It catalyses the reaction beta-D-fructose 1,6-bisphosphate + H2O = beta-D-fructose 6-phosphate + phosphate. The protein operates within carbohydrate biosynthesis; gluconeogenesis. In Shewanella sp. (strain W3-18-1), this protein is Fructose-1,6-bisphosphatase class 1.